We begin with the raw amino-acid sequence, 269 residues long: L-cystine-binding protein TcyJ (269 aa).

Positions 1 to 20 (MNKRKGLVLLLSVFALLGGG) are cleaved as a signal peptide. A lipid anchor (N-palmitoyl cysteine) is attached at C21. A lipid anchor (S-diacylglycerol cysteine) is attached at C21.

Belongs to the bacterial solute-binding protein 3 family. The complex is composed of two ATP-binding proteins (TcyN), two transmembrane proteins (TcyL and TcyM) and two solute-binding proteins (TcyJ and TcyK).

The protein resides in the cell membrane. Its function is as follows. Part of the ABC transporter complex TcyJKLMN involved in L-cystine import. Is also involved in cystathionine, djenkolate, and S-methylcysteine transport. The polypeptide is L-cystine-binding protein TcyJ (tcyJ) (Bacillus subtilis (strain 168)).